The following is a 633-amino-acid chain: Probable alkaline/neutral invertase A, chloroplastic (633 aa).

The transit peptide at 1–71 directs the protein to the chloroplast; that stretch reads MNAITFLGNS…TNAVPFCTDR (71 aa). Ser623 bears the Phosphoserine mark.

Belongs to the glycosyl hydrolase 100 family. In terms of tissue distribution, expressed in flowers.

The protein localises to the plastid. It localises to the chloroplast. It catalyses the reaction Hydrolysis of terminal non-reducing beta-D-fructofuranoside residues in beta-D-fructofuranosides.. Its function is as follows. Chloroplastic invertase that cleaves sucrose into glucose and fructose and may participate in the carbon flux between the cytosol and plastids in leaves. This Arabidopsis thaliana (Mouse-ear cress) protein is Probable alkaline/neutral invertase A, chloroplastic.